The following is a 150-amino-acid chain: Nitric oxide reductase subunit C (150 aa).

A helical; Signal-anchor transmembrane segment spans residues 13 to 29 (VFYGGSIFFILIFGALT). Heme c contacts are provided by cysteine 62, cysteine 65, and histidine 66.

In terms of assembly, heterodimer of cytochromes b (large subunit) and c (small subunit).

It localises to the cell membrane. In terms of biological role, component of the anaerobic respiratory chain that transforms nitrate to dinitrogen (denitrification). The sequence is that of Nitric oxide reductase subunit C (norC) from Paracoccus denitrificans.